Consider the following 152-residue polypeptide: Deoxyuridine 5'-triphosphate nucleotidohydrolase (152 aa).

Residues 71 to 73, N84, 88 to 90, and M98 each bind substrate; these read RSG and LVD.

The protein belongs to the dUTPase family. It depends on Mg(2+) as a cofactor.

The enzyme catalyses dUTP + H2O = dUMP + diphosphate + H(+). It functions in the pathway pyrimidine metabolism; dUMP biosynthesis; dUMP from dCTP (dUTP route): step 2/2. Functionally, this enzyme is involved in nucleotide metabolism: it produces dUMP, the immediate precursor of thymidine nucleotides and it decreases the intracellular concentration of dUTP so that uracil cannot be incorporated into DNA. The chain is Deoxyuridine 5'-triphosphate nucleotidohydrolase from Shewanella oneidensis (strain ATCC 700550 / JCM 31522 / CIP 106686 / LMG 19005 / NCIMB 14063 / MR-1).